Reading from the N-terminus, the 338-residue chain is Ketol-acid reductoisomerase (NADP(+)) (338 aa).

The KARI N-terminal Rossmann domain maps to 1–181 (MKVFYDKDCD…GGGRAGIIET (181 aa)). Residues 24-27 (YGSQ), Arg-47, and Ser-52 each bind NADP(+). His-107 is a catalytic residue. Gly-133 is a binding site for NADP(+). The KARI C-terminal knotted domain occupies 182-327 (DFREETETDL…GKLRAMMPWI (146 aa)). Mg(2+) is bound by residues Asp-190, Glu-194, Glu-226, and Glu-230. Position 251 (Ser-251) interacts with substrate.

Belongs to the ketol-acid reductoisomerase family. Requires Mg(2+) as cofactor.

The catalysed reaction is (2R)-2,3-dihydroxy-3-methylbutanoate + NADP(+) = (2S)-2-acetolactate + NADPH + H(+). It catalyses the reaction (2R,3R)-2,3-dihydroxy-3-methylpentanoate + NADP(+) = (S)-2-ethyl-2-hydroxy-3-oxobutanoate + NADPH + H(+). Its pathway is amino-acid biosynthesis; L-isoleucine biosynthesis; L-isoleucine from 2-oxobutanoate: step 2/4. It functions in the pathway amino-acid biosynthesis; L-valine biosynthesis; L-valine from pyruvate: step 2/4. Functionally, involved in the biosynthesis of branched-chain amino acids (BCAA). Catalyzes an alkyl-migration followed by a ketol-acid reduction of (S)-2-acetolactate (S2AL) to yield (R)-2,3-dihydroxy-isovalerate. In the isomerase reaction, S2AL is rearranged via a Mg-dependent methyl migration to produce 3-hydroxy-3-methyl-2-ketobutyrate (HMKB). In the reductase reaction, this 2-ketoacid undergoes a metal-dependent reduction by NADPH to yield (R)-2,3-dihydroxy-isovalerate. This is Ketol-acid reductoisomerase (NADP(+)) from Bordetella petrii (strain ATCC BAA-461 / DSM 12804 / CCUG 43448).